We begin with the raw amino-acid sequence, 289 residues long: Rhodopsin (289 aa).

Residues 1–7 (YLVNPAA) lie on the Extracellular side of the membrane. Residues 8-32 (YAALGAYMFLLILIGFPINFLTLYV) form a helical membrane-spanning segment. Residues 33-44 (TLEHKKLRTPLN) lie on the Cytoplasmic side of the membrane. The helical transmembrane segment at 45 to 67 (YILLNLAVGNLFMVLGGFTTTMY) threads the bilayer. Topologically, residues 68-81 (TSMHGYFVLGRLGC) are extracellular. Cysteine 81 and cysteine 158 are joined by a disulfide. The chain crosses the membrane as a helical span at residues 82–104 (NLEGFFATLGGEIALWSLVVLAI). The 'Ionic lock' involved in activated form stabilization signature appears at 105–107 (ERW). The Cytoplasmic segment spans residues 105–123 (ERWIVVCKPISKFRFTEDH). Residues 124 to 144 (AIMGLAFSWVMGLACAVPPLV) form a helical membrane-spanning segment. The Extracellular portion of the chain corresponds to 145 to 173 (GWSRYIPEGMKCSCGVDYYTRAEGFNNES). N-linked (GlcNAc...) asparagine glycosylation is present at asparagine 171. The chain crosses the membrane as a helical span at residues 174–195 (FVIYMFIVHFLIPLSVIFFCYG). The Cytoplasmic portion of the chain corresponds to 196–223 (RLLCAVKEAAAAQQESETTQRAEKEVSR). The chain crosses the membrane as a helical span at residues 224–245 (MVVIMVIGFLVCWLPYASVAWW). Topologically, residues 246–257 (IFCNQGSDFGPI) are extracellular. The chain crosses the membrane as a helical span at residues 258 to 279 (FMTLPSFFAKRPAIYNPMIYIC). N6-(retinylidene)lysine is present on lysine 267. Topologically, residues 280 to 289 (MNKQFRHCMI) are cytoplasmic.

It belongs to the G-protein coupled receptor 1 family. Opsin subfamily. Post-translationally, phosphorylated on some or all of the serine and threonine residues present in the C-terminal region. Contains one covalently linked retinal chromophore.

Its subcellular location is the membrane. The protein localises to the cell projection. The protein resides in the cilium. It is found in the photoreceptor outer segment. Functionally, photoreceptor required for image-forming vision at low light intensity. While most salt water fish species use retinal as chromophore, most freshwater fish use 3-dehydroretinal, or a mixture of retinal and 3-dehydroretinal. Light-induced isomerization of 11-cis to all-trans retinal triggers a conformational change that activates signaling via G-proteins. Subsequent receptor phosphorylation mediates displacement of the bound G-protein alpha subunit by arrestin and terminates signaling. This is Rhodopsin (rho) from Cottinella boulengeri (Short-headed sculpin).